Reading from the N-terminus, the 554-residue chain is Valerianol synthase TPS1B (554 aa).

2 residues coordinate Mg(2+): Asp307 and Asp311. Positions 326–330 (VQRWD) match the DDXXD motif motif. Mg(2+) is bound by residues Asp452, Ser456, and Glu460.

This sequence belongs to the terpene synthase family. Mg(2+) serves as cofactor.

The enzyme catalyses (2E,6E)-farnesyl diphosphate + H2O = valerianol + diphosphate. It functions in the pathway secondary metabolite biosynthesis; terpenoid biosynthesis. Its function is as follows. Terpene synthase that catalyzes the biosynthesis of the terpene valerianol, which is a volatile compound of floral scent. The sequence is that of Valerianol synthase TPS1B from Camellia hiemalis (Camellia).